The chain runs to 304 residues: UDP-3-O-acyl-N-acetylglucosamine deacetylase (304 aa).

Zn(2+)-binding residues include histidine 78, histidine 237, and aspartate 241. Catalysis depends on histidine 264, which acts as the Proton donor.

Belongs to the LpxC family. Zn(2+) serves as cofactor.

It carries out the reaction a UDP-3-O-[(3R)-3-hydroxyacyl]-N-acetyl-alpha-D-glucosamine + H2O = a UDP-3-O-[(3R)-3-hydroxyacyl]-alpha-D-glucosamine + acetate. It functions in the pathway glycolipid biosynthesis; lipid IV(A) biosynthesis; lipid IV(A) from (3R)-3-hydroxytetradecanoyl-[acyl-carrier-protein] and UDP-N-acetyl-alpha-D-glucosamine: step 2/6. In terms of biological role, catalyzes the hydrolysis of UDP-3-O-myristoyl-N-acetylglucosamine to form UDP-3-O-myristoylglucosamine and acetate, the committed step in lipid A biosynthesis. In Xylella fastidiosa (strain 9a5c), this protein is UDP-3-O-acyl-N-acetylglucosamine deacetylase.